A 467-amino-acid polypeptide reads, in one-letter code: Glycosyl hydrolase family 109 protein 1 (467 aa).

A signal peptide spans 1–22; sequence MKKLLLNTLIGLALLTCQTSFA. NAD(+)-binding positions include 66-67, Asp88, 137-140, 157-158, and Asn186; these read MR, WKHH, and EV. Substrate is bound by residues Tyr215, Arg231, 243–246, and Tyr321; that span reads YATH. Tyr243 is a binding site for NAD(+).

The protein belongs to the Gfo/Idh/MocA family. Glycosyl hydrolase 109 subfamily. NAD(+) serves as cofactor.

Its function is as follows. Glycosidase. This is Glycosyl hydrolase family 109 protein 1 from Bacteroides thetaiotaomicron (strain ATCC 29148 / DSM 2079 / JCM 5827 / CCUG 10774 / NCTC 10582 / VPI-5482 / E50).